Consider the following 172-residue polypeptide: Secretory-abundant heat soluble protein 64681 (172 aa).

Positions 1–19 are cleaved as a signal peptide; that stretch reads MSRTIVALILLGLAALAAA. Residues 30-59 are SAHS-c1; it reads EWAGKAWLGKWVSTDRSENWDAFVEALGLP. The SAHS-c2 stretch occupies residues 74-102; sequence WKEGDHYHHQIIIADKSYKQDIQFKLGEE. 2 N-linked (GlcNAc...) asparagine glycosylation sites follow: Asn108 and Asn133. An SAHS-c3 region spans residues 115–164; that stretch reads KYTEVGDNLQNEVKIPSKNKTISDSYVVKGDELEKTYKINDVVAKRWYKK.

The protein belongs to the Secretory-abundant heat soluble protein (SAHS) family.

It is found in the secreted. Its function is as follows. Secreted heat soluble protein acting as a molecular shield in water-deficient condition. Tardigrade-specific intrinsically disordered proteins (TDPs) are essential for desiccation tolerance by forming non-crystalline amorphous solids upon desiccation, and this vitrified state mirrors their protective capabilities. The protein is Secretory-abundant heat soluble protein 64681 of Hypsibius exemplaris (Freshwater tardigrade).